A 1356-amino-acid chain; its full sequence is Fibronectin type III domain containing protein 3C1 (1356 aa).

3 disordered regions span residues 303-341 (PRNM…SDNN), 356-402 (TYDE…SDVA), and 428-452 (NQKK…QPGC). The segment covering 308 to 341 (DNIPDTNTTDTITSSSAHTPSISTSNATFCSDNN) has biased composition (low complexity). Residues 370 to 393 (PSCTSQSASNPSVSENAHNPSSIN) show a composition bias toward polar residues. The span at 439–448 (LKEHNTEDRT) shows a compositional bias: basic and acidic residues. Fibronectin type-III domains are found at residues 454–549 (NIEK…TPGC), 553–648 (PPLA…TPPA), 650–741 (LPPK…TRPA), and 745–842 (CPNK…TLPP). Residues 825 to 838 (GQSRPSDVLTIQTP) are compositionally biased toward polar residues. Positions 825–894 (GQSRPSDVLT…QDRKVHPSSE (70 aa)) are disordered. Over residues 883-894 (PHQDRKVHPSSE) the composition is skewed to basic and acidic residues. 4 consecutive Fibronectin type-III domains span residues 914–1007 (PPSQ…TPGT), 1017–1103 (EVES…TKPL), 1104–1199 (PPEP…TKSP), and 1202–1299 (ALKA…TYKH). A disordered region spans residues 1299–1320 (HHSGHGKGSGSKGKGNHNDKGE). Residues 1330–1350 (TFVLTLLIGFALIAVLCAVAV) form a helical membrane-spanning segment. Residues 1351 to 1356 (QYLLIN) lie on the Cytoplasmic side of the membrane.

It belongs to the FNDC3 family.

It is found in the membrane. This chain is Fibronectin type III domain containing protein 3C1 (Fndc3c1), found in Mus musculus (Mouse).